The sequence spans 220 residues: Uracil-DNA glycosylase (220 aa).

The active-site Proton acceptor is the D65.

It belongs to the uracil-DNA glycosylase (UDG) superfamily. UNG family.

Its subcellular location is the cytoplasm. It catalyses the reaction Hydrolyzes single-stranded DNA or mismatched double-stranded DNA and polynucleotides, releasing free uracil.. Excises uracil residues from the DNA which can arise as a result of misincorporation of dUMP residues by DNA polymerase or due to deamination of cytosine. This chain is Uracil-DNA glycosylase, found in Phocaeicola vulgatus (strain ATCC 8482 / DSM 1447 / JCM 5826 / CCUG 4940 / NBRC 14291 / NCTC 11154) (Bacteroides vulgatus).